A 314-amino-acid polypeptide reads, in one-letter code: Methionyl-tRNA formyltransferase (314 aa).

A (6S)-5,6,7,8-tetrahydrofolate-binding site is contributed by 110-113; that stretch reads SLLP.

It belongs to the Fmt family.

It carries out the reaction L-methionyl-tRNA(fMet) + (6R)-10-formyltetrahydrofolate = N-formyl-L-methionyl-tRNA(fMet) + (6S)-5,6,7,8-tetrahydrofolate + H(+). Attaches a formyl group to the free amino group of methionyl-tRNA(fMet). The formyl group appears to play a dual role in the initiator identity of N-formylmethionyl-tRNA by promoting its recognition by IF2 and preventing the misappropriation of this tRNA by the elongation apparatus. This Bacillus thuringiensis subsp. konkukian (strain 97-27) protein is Methionyl-tRNA formyltransferase.